A 157-amino-acid polypeptide reads, in one-letter code: Phosphomannomutase (157 aa).

The active-site Phosphoserine intermediate is the Ser-98. Ser-98 lines the Mg(2+) pocket.

The protein belongs to the phosphohexose mutase family. It depends on Mg(2+) as a cofactor.

It catalyses the reaction alpha-D-mannose 1-phosphate = D-mannose 6-phosphate. The protein operates within nucleotide-sugar biosynthesis; GDP-alpha-D-mannose biosynthesis; alpha-D-mannose 1-phosphate from D-fructose 6-phosphate: step 2/2. Its pathway is capsule biogenesis; capsule polysaccharide biosynthesis. Functionally, involved in the biosynthesis of the K2 capsular polysaccharide biosynthesis. This chain is Phosphomannomutase (manB), found in Klebsiella pneumoniae.